A 476-amino-acid polypeptide reads, in one-letter code: Inosine-5'-monophosphate dehydrogenase (476 aa).

2 consecutive CBS domains span residues 92 to 150 (MIEN…IADV) and 151 to 207 (MTKD…PNAS). Residues aspartate 244 and 294-296 (GVG) contribute to the NAD(+) site. Glycine 296 and glycine 298 together coordinate K(+). Serine 299 is a binding site for IMP. Cysteine 301 contacts K(+). Cysteine 301 functions as the Thioimidate intermediate in the catalytic mechanism. IMP contacts are provided by residues 334-336 (DGG), 357-358 (GS), 381-385 (YRGMA), and glutamate 413. K(+)-binding residues include glutamate 467 and serine 468.

This sequence belongs to the IMPDH/GMPR family. As to quaternary structure, homotetramer. K(+) serves as cofactor.

It carries out the reaction IMP + NAD(+) + H2O = XMP + NADH + H(+). It participates in purine metabolism; XMP biosynthesis via de novo pathway; XMP from IMP: step 1/1. With respect to regulation, mycophenolic acid (MPA) is a non-competitive inhibitor that prevents formation of the closed enzyme conformation by binding to the same site as the amobile flap. In contrast, mizoribine monophosphate (MZP) is a competitive inhibitor that induces the closed conformation. MPA is a potent inhibitor of mammalian IMPDHs but a poor inhibitor of the bacterial enzymes. MZP is a more potent inhibitor of bacterial IMPDH. In terms of biological role, catalyzes the conversion of inosine 5'-phosphate (IMP) to xanthosine 5'-phosphate (XMP), the first committed and rate-limiting step in the de novo synthesis of guanine nucleotides, and therefore plays an important role in the regulation of cell growth. This Nitrosopumilus maritimus (strain SCM1) protein is Inosine-5'-monophosphate dehydrogenase.